Reading from the N-terminus, the 256-residue chain is Kallikrein-15 (256 aa).

An N-terminal signal peptide occupies residues 1–16 (MWLLLTLSFLLASTAA). A propeptide spans 17–21 (QDGDK) (activation peptide). Positions 22 to 254 (LLEGDECAPH…YLEWIRETMK (233 aa)) constitute a Peptidase S1 domain. Cys-47 and Cys-63 are joined by a disulfide. Residues His-62 and Asp-106 each act as charge relay system in the active site. Cystine bridges form between Cys-138/Cys-215, Cys-180/Cys-194, and Cys-205/Cys-230. Asn-171 carries N-linked (GlcNAc...) asparagine glycosylation. Ser-209 serves as the catalytic Charge relay system. N-linked (GlcNAc...) asparagine glycosylation occurs at Asn-232.

It belongs to the peptidase S1 family. Kallikrein subfamily. As to expression, highest expression in the thyroid gland. Also expressed in the prostate, salivary, and adrenal glands and in the colon testis and kidney.

The protein resides in the secreted. Its function is as follows. Protease whose physiological substrate is not yet known. In Homo sapiens (Human), this protein is Kallikrein-15 (KLK15).